The sequence spans 274 residues: Putative phosphatase BUsg_029 (274 aa).

The Nucleophile role is filled by Asp8. Asp8 provides a ligand contact to Mg(2+). Leu9 contacts phosphate. Asp10 is a binding site for Mg(2+). Residues 42-43 (SG) and Lys191 each bind phosphate. Asp214 is a Mg(2+) binding site. A phosphate-binding site is contributed by Asn217.

It belongs to the HAD-like hydrolase superfamily. Cof family. Mg(2+) is required as a cofactor.

This Buchnera aphidicola subsp. Schizaphis graminum (strain Sg) protein is Putative phosphatase BUsg_029.